Consider the following 87-residue polypeptide: uncharacterized protein (87 aa).

The 2Fe-2S ferredoxin-type domain maps to 4–87; it reads SKIIILNNNK…TISGSILIKI (84 aa). [2Fe-2S] cluster contacts are provided by cysteine 39, cysteine 44, cysteine 47, and cysteine 75.

[2Fe-2S] cluster is required as a cofactor.

This is an uncharacterized protein from Buchnera aphidicola subsp. Baizongia pistaciae (strain Bp).